We begin with the raw amino-acid sequence, 72 residues long: DNA-directed RNA polymerase subunit epsilon (72 aa).

Belongs to the RNA polymerase subunit epsilon family. RNAP is composed of a core of 2 alpha, a beta and a beta' subunit. The core is associated with a delta subunit, and at least one of epsilon or omega. When a sigma factor is associated with the core the holoenzyme is formed, which can initiate transcription.

It catalyses the reaction RNA(n) + a ribonucleoside 5'-triphosphate = RNA(n+1) + diphosphate. Its function is as follows. A non-essential component of RNA polymerase (RNAP). This Levilactobacillus brevis (strain ATCC 367 / BCRC 12310 / CIP 105137 / JCM 1170 / LMG 11437 / NCIMB 947 / NCTC 947) (Lactobacillus brevis) protein is DNA-directed RNA polymerase subunit epsilon.